We begin with the raw amino-acid sequence, 131 residues long: MEIKRVGSQASGKGPADWFTGTVRIDPLFQAPDPALVAGASVTFEPGARTAWHTHPLGQTLIVTAGCGWAQREGGAVEEIHPGDVVWFSPGEKHWHGAAPTTAMTHLAIQERLDGKAVDWMEHVTDEQYRR.

In terms of domain architecture, Cupin type-2 spans 42-104; it reads VTFEPGARTA…WHGAAPTTAM (63 aa). Mn(2+) contacts are provided by His53, His55, Gln59, His94, and His96.

This sequence belongs to the cupin domain-containing hydroxynitrile lyase family. The cofactor is Mn(2+).

The enzyme catalyses (R)-mandelonitrile = benzaldehyde + hydrogen cyanide. In terms of biological role, hydroxynitrile lyase which catalyzes mandelonitrile formation from benzaldehyde and hydrogen cyanide with high stereoselectivity in presence of manganese. In Granulicella tundricola (strain ATCC BAA-1859 / DSM 23138 / MP5ACTX9), this protein is (R)-mandelonitrile lyase.